A 900-amino-acid chain; its full sequence is Formin-like protein 5 (900 aa).

The helical; Signal-anchor transmembrane segment at 15–32 (SRLVFWLILFSGLLVITL) threads the bilayer. Positions 136 to 209 (RNLATKPGSS…PVSPAKKKED (74 aa)) are disordered. The segment covering 160–173 (PPRPPTRPKSPPPR) has biased composition (pro residues). The chain crosses the membrane as a helical span at residues 214 to 234 (IIIAVVVTAVSTFLLAALFFL). Disordered regions lie at residues 273 to 440 (SVKG…DAPK) and 849 to 900 (ARGR…SDSD). Residues 281-304 (HQSFNIYSNQGKMSSFDGSNSDTS) are compositionally biased toward polar residues. The span at 307–316 (LEERLSHEGL) shows a compositional bias: basic and acidic residues. Residues 359–368 (FLKVSSKKAS) show a composition bias toward low complexity. Over residues 369-429 (APPPPVPAPQ…GPKAPRPPSG (61 aa)) the composition is skewed to pro residues. Positions 433–865 (ALDDDAPKTK…MARKQGSTAS (433 aa)) constitute an FH2 domain. The segment covering 860–876 (QGSTASASSETPRQTPS) has biased composition (polar residues).

Belongs to the formin-like family. Class-I subfamily. As to expression, expressed in the endosperm. Localizes to the cell plate, a plant-specific membranous component that is assembled at the plane of cell division.

The protein localises to the membrane. Its function is as follows. Might be involved in the organization and polarity of the actin cytoskeleton. Interacts with the barbed end of actin filaments and nucleates actin-filament polymerization in vitro. Seems to play a role in cytokinesis. The sequence is that of Formin-like protein 5 (FH5) from Arabidopsis thaliana (Mouse-ear cress).